A 384-amino-acid polypeptide reads, in one-letter code: DNA dC-&gt;dU-editing enzyme APOBEC-3G (384 aa).

Residues 1–60 form an essential for cytoplasmic localization region; it reads MTPQFRNTVERMYRDTFSYNFNNRPILSRRNTVWLCYEVKTKDPSRPPLDAKIFRGQVYS. CMP/dCMP-type deaminase domains follow at residues 29-138 and 214-328; these read RRNT…LRSL and GRHE…LRTL. Thr32 is subject to Phosphothreonine; by PKA. The Zn(2+) site is built by His65, Cys97, and Cys100. The interval 209-336 is necessary for homooligomerization; that stretch reads EHWVRGRHET…TLAEAGAKIS (128 aa). The interval 213–215 is interaction with DNA; sequence RGR. Thr218 carries the post-translational modification Phosphothreonine; by PKA and CAMK2. A Zn(2+)-binding site is contributed by His257. Catalysis depends on Glu259, which acts as the Proton donor. 2 residues coordinate Zn(2+): Cys288 and Cys291. Residues 313 to 320 form an interaction with DNA region; sequence RIYDDQGR.

It belongs to the cytidine and deoxycytidylate deaminase family. In terms of assembly, homodimer. Homooligomer. Can bind RNA to form ribonucleoprotein complexes of high-molecular-mass (HMM) or low-molecular-mass (LMM). HMM is inactive and heterogeneous in protein composition because of binding nonselectively to cellular RNAs, which in turn are associated with variety of cellular proteins. The LMM form which is enzymatically active has few or no RNAs associated. Its ability to form homooligomer is distinct from its ability to assemble into HMM. Interacts with APOBEC3B, APOBEC3F, MOV10, AGO2, EIF4E, EIF4ENIF1, DCP2 and DDX6 in an RNA-dependent manner. Interacts with AGO1, AGO3 and PKA/PRKACA. Zn(2+) is required as a cofactor.

It is found in the cytoplasm. The protein resides in the nucleus. Its subcellular location is the P-body. It catalyses the reaction a 2'-deoxycytidine in single-stranded DNA + H2O + H(+) = a 2'-deoxyuridine in single-stranded DNA + NH4(+). In terms of biological role, DNA deaminase (cytidine deaminase) which acts as an inhibitor of retrovirus replication and retrotransposon mobility. After the penetration of retroviral nucleocapsids into target cells of infection and the initiation of reverse transcription, it can induce the conversion of cytosine to uracil in the minus-sense single-strand viral DNA, leading to G-to-A hypermutations in the subsequent plus-strand viral DNA. The resultant detrimental levels of mutations in the proviral genome, along with a deamination-independent mechanism that works prior to the proviral integration, together exert efficient antiretroviral effects in infected target cells. Selectively targets single-stranded DNA and does not deaminate double-stranded DNA or single- or double-stranded RNA. The protein is DNA dC-&gt;dU-editing enzyme APOBEC-3G (APOBEC3G) of Gorilla gorilla gorilla (Western lowland gorilla).